Here is a 159-residue protein sequence, read N- to C-terminus: Large ribosomal subunit protein uL10 (159 aa).

The protein belongs to the universal ribosomal protein uL10 family. Part of the ribosomal stalk of the 50S ribosomal subunit. The N-terminus interacts with L11 and the large rRNA to form the base of the stalk. The C-terminus forms an elongated spine to which L12 dimers bind in a sequential fashion forming a multimeric L10(L12)X complex.

Functionally, forms part of the ribosomal stalk, playing a central role in the interaction of the ribosome with GTP-bound translation factors. The sequence is that of Large ribosomal subunit protein uL10 from Nautilia profundicola (strain ATCC BAA-1463 / DSM 18972 / AmH).